The sequence spans 287 residues: ATP synthase gamma chain (287 aa).

It belongs to the ATPase gamma chain family. In terms of assembly, F-type ATPases have 2 components, CF(1) - the catalytic core - and CF(0) - the membrane proton channel. CF(1) has five subunits: alpha(3), beta(3), gamma(1), delta(1), epsilon(1). CF(0) has three main subunits: a, b and c.

It is found in the cell inner membrane. Functionally, produces ATP from ADP in the presence of a proton gradient across the membrane. The gamma chain is believed to be important in regulating ATPase activity and the flow of protons through the CF(0) complex. The polypeptide is ATP synthase gamma chain (Geotalea daltonii (strain DSM 22248 / JCM 15807 / FRC-32) (Geobacter daltonii)).